An 86-amino-acid chain; its full sequence is Maxadilan (86 aa).

The N-terminal stretch at M1–G23 is a signal peptide. 2 disulfides stabilise this stretch: C24–C28 and C37–C74.

As to quaternary structure, interacts with human ADCYAP1R1. Salivary gland (at protein level).

It localises to the secreted. Potent vasodilator. Activates mammalian ADCYAP1R1, a PAC1 receptor, and induces cAMP accumulation in host cells. Causes the development of erythema following superficial injection into the rabbit or human skin. Influences adaptive immune responses mediated by host dendritic cells. Reduces surface expression of CD80 on host dendritic cells stimulated with lipopolysaccharides (LPS) and induces concomitant increase in CD86 expression on a subpopulation of these cells. Redirects cytokine secretion by LPS-activated host dendritic cells toward type 2 responses: decreases secretion of TNF-alpha/TNF, IL-12p40/IL12B and IFN-gamma/IFNG, and increases secretion of IL6 and IL10. Reduces ability of host bone marrow-derived dendritic cells to stimulate proliferation of CD4(+) T-cells. Reprograms the effect of LPS-activated host dendritic cells on cytokine secretion profiles in host T-cells: decreases secretion of TNF-alpha/TNF and IFN-gamma/IFNG, increases secretion of IL6 and IL13, and increases secretion of pro-inflammatory cytokine IL-1beta/IL1B in mixed lymphocyte reaction (MLR) cultures. Reduces LPS-induced up-regulation of CCR7 in activated host dendritic cells. Inhibits IFN-gamma/IFNG and IL-12p40/IL12B production by human peripheral blood mononuclear cells. Increases IL6 and decreases TNF-alpha/TNF production by LPS-stimulated human monocytes. Its function is as follows. (Microbial infection) Probably plays a critical role in the enhancement of Leishmania infectivity in the host attributed to sand fly saliva. This chain is Maxadilan, found in Lutzomyia longipalpis (Sand fly).